A 722-amino-acid chain; its full sequence is BTB/POZ domain-containing protein 9 (722 aa).

One can recognise a BTB domain in the interval 46-112 (ADVEFIVEEE…IYSGTLLLST (67 aa)). The BACK domain occupies 151 to 247 (CMILDAARLY…MNLEHLLQVV (97 aa)). Positions 565–593 (QDKNYLKKIADMEKEREKREKEKKTAKTD) form a coiled coil. A compositionally biased stretch (basic and acidic residues) spans 577–594 (EKEREKREKEKKTAKTDD). 2 disordered regions span residues 577–626 (EKER…VLRS) and 640–722 (PLTP…RETL). Positions 597–606 (IASTSGSSLA) are enriched in polar residues. The segment covering 607-626 (SGHAESPSTSSSSSQSVLRS) has biased composition (low complexity). Residues 641-658 (LTPPALSPPGTPALPAPL) show a composition bias toward pro residues. A compositionally biased stretch (polar residues) spans 670–679 (EQNQPSNISA). Over residues 686–704 (SPSSRSNPSPSLSRSRSQS) the composition is skewed to low complexity.

In terms of tissue distribution, detected in the brain (at protein level).

It localises to the cytoplasm. Essential for the homeostatic regulation of sleep and motor activity, by depressing hyperactivity and wakefulness. May function, at least in part, by ensuring dopamine biosynthesis. This is BTB/POZ domain-containing protein 9 from Drosophila melanogaster (Fruit fly).